A 602-amino-acid chain; its full sequence is Pyranose dehydrogenase 1 (602 aa).

The signal sequence occupies residues 1–25 (MLPRVTKLNSRLLSLALLGIQIARG). Asparagine 100 carries N-linked (GlcNAc...) asparagine glycosylation. Tele-8alpha-FAD histidine is present on histidine 128. N-linked (GlcNAc...) asparagine glycosylation is found at asparagine 200, asparagine 277, and asparagine 344. The active-site Proton acceptor is histidine 537. Histidine 581 is a catalytic residue.

Belongs to the GMC oxidoreductase family. As to quaternary structure, monomer. FAD serves as cofactor. N-glycosylated.

The protein localises to the secreted. The enzyme catalyses pyranose + acceptor = pyranos-2-ulose + reduced acceptor.. It catalyses the reaction pyranose + acceptor = pyranos-3-ulose + reduced acceptor.. The catalysed reaction is pyranose + acceptor = pyranos-2,3-diulose + reduced acceptor.. It carries out the reaction a pyranoside + acceptor = a pyranosid-3-ulose + reduced acceptor.. The enzyme catalyses a pyranoside + acceptor = a pyranosid-3,4-diulose + reduced acceptor.. Functionally, catalyzes the single-oxidation or sequential double oxidation reaction of carbohydrates primarily at carbon-2 and/or carbon-3 with the concomitant reduction of the flavin. The enzyme exhibits a broad sugar substrate specificity, oxidizing different aldopyranoses to the corresponding C-1, C-2, C-3 or C-1,2, C-2,3 and C-3,4 (di)dehydro sugars with substrate-specific regioselectivity. Accepts only a narrow range of electron acceptors such as substituted benzoquinones and complexed metal ions and reacts extremely slowly with O(2) as acceptor. May play a role in the natural recycling of plant matter by oxidizing all major monosaccharides in lignocellulose and by reducing quinone compounds or reactive radical species generated during lignin depolymerization. This Leucoagaricus meleagris (Western flat-topped agaric) protein is Pyranose dehydrogenase 1.